Consider the following 502-residue polypeptide: 4,4'-diapophytoene desaturase (4,4'-diaponeurosporene-forming) (502 aa).

5–17 (VIGAGVTGLAAAA) is a binding site for FAD.

The protein belongs to the carotenoid/retinoid oxidoreductase family. CrtN subfamily.

The catalysed reaction is 15-cis-4,4'-diapophytoene + 3 FAD + 3 H(+) = all-trans-4,4'-diaponeurosporene + 3 FADH2. The protein operates within carotenoid biosynthesis; staphyloxanthin biosynthesis; staphyloxanthin from farnesyl diphosphate: step 2/5. In terms of biological role, involved in the biosynthesis of the yellow-orange carotenoid staphyloxanthin, which plays a role in the virulence via its protective function against oxidative stress. Catalyzes three successive dehydrogenation reactions that lead to the introduction of three double bonds into 4,4'-diapophytoene (dehydrosqualene), with 4,4'-diapophytofluene and 4,4'-diapo-zeta-carotene as intermediates, and 4,4'-diaponeurosporene (the major deep-yellow pigment in staphylococci strains) as the end product. The polypeptide is 4,4'-diapophytoene desaturase (4,4'-diaponeurosporene-forming) (Staphylococcus aureus (strain USA300)).